Reading from the N-terminus, the 271-residue chain is Phosphate import ATP-binding protein PstB 3 (271 aa).

One can recognise an ABC transporter domain in the interval 20–266 (LRVEGLGFYY…PQETQTRDYV (247 aa)). 52-59 (GPSGCGKS) contacts ATP.

It belongs to the ABC transporter superfamily. Phosphate importer (TC 3.A.1.7) family. In terms of assembly, the complex is composed of two ATP-binding proteins (PstB), two transmembrane proteins (PstC and PstA) and a solute-binding protein (PstS).

It is found in the cell inner membrane. The catalysed reaction is phosphate(out) + ATP + H2O = ADP + 2 phosphate(in) + H(+). Its function is as follows. Part of the ABC transporter complex PstSACB involved in phosphate import. Responsible for energy coupling to the transport system. The chain is Phosphate import ATP-binding protein PstB 3 from Synechocystis sp. (strain ATCC 27184 / PCC 6803 / Kazusa).